The following is a 349-amino-acid chain: Hepatic sodium/bile acid cotransporter (349 aa).

At 1–22 the chain is on the extracellular side; that stretch reads MEAHNASAPFNFTLPPNFGKRP. Residues N5 and N11 are each glycosylated (N-linked (GlcNAc...) asparagine). The chain crosses the membrane as a helical span at residues 23–44; it reads TDLALSVILVFMLFFIMLSLGC. The Cytoplasmic segment spans residues 45–47; the sequence is TME. Residues 48–83 traverse the membrane as a helical segment; sequence FSKIKAHLWKPKGLAIALVAQYGIMPLTAFVLGKVF. Topologically, residues 84-86 are extracellular; that stretch reads RLK. Residues 87–112 traverse the membrane as a discontinuously helical segment; sequence NIEALAILVCGCSPGGNLSNVFSLAM. Residues 113 to 115 are Cytoplasmic-facing; sequence KGD. Residues 116–142 traverse the membrane as a helical segment; that stretch reads MNLSIVMTTCSTFCALGMMPLLLYIYS. Topologically, residues 143–156 are extracellular; the sequence is RGIYDGDLKDKVPY. The helical transmembrane segment at 157–179 threads the bilayer; sequence KGIVISLVLVLIPCTIGIVLKSK. Residues 180-183 lie on the Cytoplasmic side of the membrane; it reads RPQY. The chain crosses the membrane as a helical span at residues 184–217; that stretch reads MRYVIKGGMIIILLCSVAVTVLSAINVGKSIMFA. Residues 218–219 lie on the Extracellular side of the membrane; it reads MT. A helical membrane pass occupies residues 220 to 243; it reads PLLIATSSLMPFIGFLLGYVLSAL. Over 244 to 247 the chain is Cytoplasmic; sequence FCLN. The discontinuously helical transmembrane segment at 248-273 threads the bilayer; that stretch reads GRCRRTVSMETGCQNVQLCSTILNVA. Residues 274–280 lie on the Extracellular side of the membrane; the sequence is FPPEVIG. A helical transmembrane segment spans residues 281–311; sequence PLFFFPLLYMIFQLGEGLLLIAIFWCYEKFK. Topologically, residues 312–349 are cytoplasmic; that stretch reads TPKDKTKMIYTAATTEETIPGALGNGTYKGEDCSPCTA.

This sequence belongs to the bile acid:sodium symporter (BASS) (TC 2.A.28) family. As to quaternary structure, (Microbial infection) Interacts with the myristoylated pre-S1 domain of hepatitis B virus large envelope protein; myristoylation is essential for this interaction. Expressed in liver. Expressed in placental trophoblasts.

The protein resides in the cell membrane. The catalysed reaction is taurocholate(out) + 2 Na(+)(out) = taurocholate(in) + 2 Na(+)(in). The enzyme catalyses cholate(out) + 2 Na(+)(out) = cholate(in) + 2 Na(+)(in). It catalyses the reaction estrone 3-sulfate(out) + 2 Na(+)(out) = estrone 3-sulfate(in) + 2 Na(+)(in). It carries out the reaction taurochenodeoxycholate(out) + 2 Na(+)(out) = taurochenodeoxycholate(in) + 2 Na(+)(in). The catalysed reaction is tauroursodeoxycholate(out) + 2 Na(+)(out) = tauroursodeoxycholate(in) + 2 Na(+)(in). The enzyme catalyses glycocholate(out) + 2 Na(+)(out) = glycocholate(in) + 2 Na(+)(in). It catalyses the reaction tauronorcholate(out) + 2 Na(+)(out) = tauronorcholate(in) + 2 Na(+)(in). It carries out the reaction taurodeoxycholate(out) + 2 Na(+)(out) = taurodeoxycholate(in) + 2 Na(+)(in). The catalysed reaction is tauroallocholate(out) + 2 Na(+)(out) = tauroallocholate(in) + 2 Na(+)(in). The enzyme catalyses taurohyodeoxycholate(out) + 2 Na(+)(out) = taurohyodeoxycholate(in) + 2 Na(+)(in). It catalyses the reaction taurohyocholate(out) + 2 Na(+)(out) = taurohyocholate(in) + 2 Na(+)(in). It carries out the reaction tauro-beta-muricholate(out) + 2 Na(+)(out) = tauro-beta-muricholate(in) + 2 Na(+)(in). The transport of bile acids is sodium-dependent. In terms of biological role, as a major transporter of conjugated bile salts from plasma into the hepatocyte, it plays a key role in the enterohepatic circulation of bile salts necessary for the solubilization and absorption of dietary fat and fat-soluble vitamins. It is strictly dependent on the extracellular presence of sodium. It exhibits broad substrate specificity and transports various bile acids, such as taurocholate, cholate, as well as non-bile acid organic compounds, such as estrone sulfate. Works collaboratively with the ileal transporter (NTCP2), the organic solute transporter (OST), and the bile salt export pump (BSEP), to ensure efficacious biological recycling of bile acids during enterohepatic circulation. Functionally, (Microbial infection) Acts as an entry receptor for hepatitis B virus (HBV). The recognition for human SLC10A1/NTCP is highly specific. The protein is Hepatic sodium/bile acid cotransporter (SLC10A1) of Homo sapiens (Human).